The following is a 183-amino-acid chain: Oligoribonuclease (183 aa).

The region spanning 8–171 (LIWLDLEMTG…QDIRDSIEEL (164 aa)) is the Exonuclease domain. The active site involves tyrosine 129.

The protein belongs to the oligoribonuclease family.

It localises to the cytoplasm. Its function is as follows. 3'-to-5' exoribonuclease specific for small oligoribonucleotides. The protein is Oligoribonuclease of Coxiella burnetii (strain RSA 493 / Nine Mile phase I).